The chain runs to 63 residues: uncharacterized protein (63 aa).

The protein resides in the mitochondrion. This is an uncharacterized protein from Marchantia polymorpha (Common liverwort).